Here is a 397-residue protein sequence, read N- to C-terminus: Elongation factor Tu (397 aa).

Residues 10–206 enclose the tr-type G domain; it reads KPHVNIGTIG…AVDSYIPTPE (197 aa). A G1 region spans residues 19-26; that stretch reads GHVDHGKT. GTP is bound at residue 19–26; it reads GHVDHGKT. A Mg(2+)-binding site is contributed by Thr26. Positions 60–64 are G2; it reads GITIN. The tract at residues 81–84 is G3; it reads DCPG. GTP is bound by residues 81–85 and 136–139; these read DCPGH and NKAD. The interval 136–139 is G4; that stretch reads NKAD. A G5 region spans residues 174–176; it reads SAL.

This sequence belongs to the TRAFAC class translation factor GTPase superfamily. Classic translation factor GTPase family. EF-Tu/EF-1A subfamily. In terms of assembly, monomer.

It localises to the cytoplasm. It catalyses the reaction GTP + H2O = GDP + phosphate + H(+). GTP hydrolase that promotes the GTP-dependent binding of aminoacyl-tRNA to the A-site of ribosomes during protein biosynthesis. The sequence is that of Elongation factor Tu from Clostridium perfringens (strain ATCC 13124 / DSM 756 / JCM 1290 / NCIMB 6125 / NCTC 8237 / Type A).